The chain runs to 210 residues: Protein RFS1 (210 aa).

Residues Val-4–Phe-203 form the Flavodoxin-like domain.

This sequence belongs to the WrbA family.

The protein resides in the cytoplasm. The protein localises to the membrane raft. The protein is Protein RFS1 (RFS1) of Saccharomyces cerevisiae (strain ATCC 204508 / S288c) (Baker's yeast).